The chain runs to 166 residues: Lipoprotein signal peptidase (166 aa).

3 consecutive transmembrane segments (helical) span residues 10 to 30 (LIWL…KAWV), 68 to 88 (WQLW…AFWL), and 94 to 114 (GHWR…GNVI). Residues Asp-124 and Asp-142 contribute to the active site. A helical transmembrane segment spans residues 138 to 158 (FNIADSAIVGGAIGIAVFGLF).

It belongs to the peptidase A8 family.

The protein localises to the cell inner membrane. It carries out the reaction Release of signal peptides from bacterial membrane prolipoproteins. Hydrolyzes -Xaa-Yaa-Zaa-|-(S,diacylglyceryl)Cys-, in which Xaa is hydrophobic (preferably Leu), and Yaa (Ala or Ser) and Zaa (Gly or Ala) have small, neutral side chains.. It participates in protein modification; lipoprotein biosynthesis (signal peptide cleavage). Functionally, this protein specifically catalyzes the removal of signal peptides from prolipoproteins. The protein is Lipoprotein signal peptidase of Xanthomonas oryzae pv. oryzae (strain MAFF 311018).